A 479-amino-acid chain; its full sequence is Serine--tRNA ligase, mitochondrial (479 aa).

The N-terminal 42 residues, M1 to L42, are a transit peptide targeting the mitochondrion. T287–E289 provides a ligand contact to L-serine. Residue R317–E319 participates in ATP binding. E340 is a binding site for L-serine. An ATP-binding site is contributed by E404–S407. T438 lines the L-serine pocket.

This sequence belongs to the class-II aminoacyl-tRNA synthetase family. Type-1 seryl-tRNA synthetase subfamily. Homodimer. The tRNA molecule probably binds across the dimer.

Its subcellular location is the mitochondrion matrix. The catalysed reaction is tRNA(Ser) + L-serine + ATP = L-seryl-tRNA(Ser) + AMP + diphosphate + H(+). Functionally, catalyzes the attachment of serine to tRNA(Ser). Is also probably able to aminoacylate tRNA(Sec) with serine, to form the misacylated tRNA L-seryl-tRNA(Sec), which will be further converted into selenocysteinyl-tRNA(Sec). The sequence is that of Serine--tRNA ligase, mitochondrial (dia4) from Schizosaccharomyces pombe (strain 972 / ATCC 24843) (Fission yeast).